Consider the following 896-residue polypeptide: DNA mismatch repair protein MutS (896 aa).

638–645 (GPNMSGKS) lines the ATP pocket.

The protein belongs to the DNA mismatch repair MutS family.

In terms of biological role, this protein is involved in the repair of mismatches in DNA. It is possible that it carries out the mismatch recognition step. This protein has a weak ATPase activity. This Fusobacterium nucleatum subsp. nucleatum (strain ATCC 25586 / DSM 15643 / BCRC 10681 / CIP 101130 / JCM 8532 / KCTC 2640 / LMG 13131 / VPI 4355) protein is DNA mismatch repair protein MutS.